The chain runs to 172 residues: Ribosome maturation factor RimM (172 aa).

The region spanning 97–170 is the PRC barrel domain; sequence ENEFYFHEII…KITIEVMEGL (74 aa).

It belongs to the RimM family. In terms of assembly, binds ribosomal protein uS19.

The protein localises to the cytoplasm. Its function is as follows. An accessory protein needed during the final step in the assembly of 30S ribosomal subunit, possibly for assembly of the head region. Essential for efficient processing of 16S rRNA. May be needed both before and after RbfA during the maturation of 16S rRNA. It has affinity for free ribosomal 30S subunits but not for 70S ribosomes. In Listeria innocua serovar 6a (strain ATCC BAA-680 / CLIP 11262), this protein is Ribosome maturation factor RimM.